The chain runs to 126 residues: Histone H2B type 1-K (126 aa).

The span at 1-12 (MPEPAKSAPAPK) shows a compositional bias: low complexity. The segment at 1 to 36 (MPEPAKSAPAPKKGSKKAVTKAQKKDGKKRKRSRKE) is disordered. Pro2 carries the N-acetylproline modification. Glu3 bears the ADP-ribosyl glutamic acid mark. Lys6 bears the N6-(2-hydroxyisobutyryl)lysine; alternate mark. Position 6 is an N6-(beta-hydroxybutyryl)lysine; alternate (Lys6). An N6-acetyllysine; alternate modification is found at Lys6. Lys6 carries the post-translational modification N6-butyryllysine; alternate. The residue at position 6 (Lys6) is an N6-crotonyllysine; alternate. Position 6 is an N6-lactoyllysine; alternate (Lys6). Lys6 participates in a covalent cross-link: Glycyl lysine isopeptide (Lys-Gly) (interchain with G-Cter in SUMO2); alternate. At Ser7 the chain carries ADP-ribosylserine. N6-(beta-hydroxybutyryl)lysine; alternate is present on Lys12. Lys12 and Lys13 each carry N6-acetyllysine; alternate. An N6-crotonyllysine; alternate mark is found at Lys12 and Lys13. N6-lactoyllysine; alternate is present on Lys12. Lys13 is subject to N6-(2-hydroxyisobutyryl)lysine; alternate. Ser15 carries the phosphoserine; by STK4/MST1 modification. Lys16, Lys17, Lys21, and Lys24 each carry N6-acetyllysine; alternate. Lys16, Lys17, Lys21, and Lys24 each carry N6-crotonyllysine; alternate. Residues Lys16, Lys17, Lys21, and Lys24 each carry the N6-lactoyllysine; alternate modification. Residues Lys17 and Lys21 each carry the N6-(beta-hydroxybutyryl)lysine; alternate modification. Position 17 is an N6-glutaryllysine; alternate (Lys17). Residues Lys21 and Lys24 each carry the N6-(2-hydroxyisobutyryl)lysine; alternate modification. N6-butyryllysine; alternate is present on Lys21. Residue Lys21 forms a Glycyl lysine isopeptide (Lys-Gly) (interchain with G-Cter in SUMO2); alternate linkage. Lys25 bears the N6-(2-hydroxyisobutyryl)lysine mark. Lys35 bears the N6-(2-hydroxyisobutyryl)lysine; alternate mark. Lys35 bears the N6-(beta-hydroxybutyryl)lysine; alternate mark. Position 35 is an N6-crotonyllysine; alternate (Lys35). Residue Lys35 is modified to N6-glutaryllysine; alternate. Lys35 carries the post-translational modification N6-succinyllysine; alternate. Lys35 is covalently cross-linked (Glycyl lysine isopeptide (Lys-Gly) (interchain with G-Cter in ubiquitin); alternate). Position 36 is a polyADP-ribosyl glutamic acid (Glu36). Ser37 carries the post-translational modification Phosphoserine; by AMPK. Residues Lys44, Lys47, and Lys58 each carry the N6-(2-hydroxyisobutyryl)lysine; alternate modification. The residue at position 44 (Lys44) is an N6-lactoyllysine; alternate. N6-glutaryllysine; alternate occurs at positions 44 and 47. Lys47 carries the post-translational modification N6-methyllysine; alternate. An N6,N6-dimethyllysine; alternate modification is found at Lys58. Arg80 is modified (dimethylated arginine). At Lys86 the chain carries N6-(2-hydroxyisobutyryl)lysine; alternate. N6-(beta-hydroxybutyryl)lysine; alternate is present on Lys86. Residue Lys86 is modified to N6-acetyllysine; alternate. Lys86 bears the N6-lactoyllysine; alternate mark. The residue at position 86 (Lys86) is an N6,N6,N6-trimethyllysine; alternate. Residues Arg87 and Arg93 each carry the omega-N-methylarginine modification. The residue at position 109 (Lys109) is an N6-(2-hydroxyisobutyryl)lysine; alternate. Lys109 is subject to N6-lactoyllysine; alternate. Lys109 bears the N6-glutaryllysine; alternate mark. Lys109 bears the N6-methyllysine; alternate mark. An O-linked (GlcNAc) serine glycan is attached at Ser113. Position 116 is a phosphothreonine (Thr116). Lys117 and Lys121 each carry N6-(2-hydroxyisobutyryl)lysine; alternate. N6-(beta-hydroxybutyryl)lysine; alternate is present on residues Lys117 and Lys121. N6-lactoyllysine; alternate occurs at positions 117 and 121. An N6-glutaryllysine; alternate mark is found at Lys117 and Lys121. An N6-succinyllysine; alternate mark is found at Lys117 and Lys121. Residue Lys117 is modified to N6-malonyllysine; alternate. The residue at position 117 (Lys117) is an N6-methylated lysine; alternate. Lys121 participates in a covalent cross-link: Glycyl lysine isopeptide (Lys-Gly) (interchain with G-Cter in ubiquitin); alternate.

It belongs to the histone H2B family. In terms of assembly, the nucleosome is a histone octamer containing two molecules each of H2A, H2B, H3 and H4 assembled in one H3-H4 heterotetramer and two H2A-H2B heterodimers. The octamer wraps approximately 147 bp of DNA. In terms of processing, monoubiquitination at Lys-35 (H2BK34Ub) by the MSL1/MSL2 dimer is required for histone H3 'Lys-4' (H3K4me) and 'Lys-79' (H3K79me) methylation and transcription activation at specific gene loci, such as HOXA9 and MEIS1 loci. Similarly, monoubiquitination at Lys-121 (H2BK120Ub) by the RNF20/40 complex gives a specific tag for epigenetic transcriptional activation and is also prerequisite for histone H3 'Lys-4' and 'Lys-79' methylation. It also functions cooperatively with the FACT dimer to stimulate elongation by RNA polymerase II. H2BK120Ub also acts as a regulator of mRNA splicing: deubiquitination by USP49 is required for efficient cotranscriptional splicing of a large set of exons. Phosphorylation at Ser-37 (H2BS36ph) by AMPK in response to stress promotes transcription. Phosphorylated on Ser-15 (H2BS14ph) by STK4/MST1 during apoptosis; which facilitates apoptotic chromatin condensation. Also phosphorylated on Ser-15 in response to DNA double strand breaks (DSBs), and in correlation with somatic hypermutation and immunoglobulin class-switch recombination. Post-translationally, glcNAcylation at Ser-113 promotes monoubiquitination of Lys-121. It fluctuates in response to extracellular glucose, and associates with transcribed genes. In terms of processing, ADP-ribosylated by PARP1 or PARP2 on Ser-7 (H2BS6ADPr) in response to DNA damage. H2BS6ADPr promotes recruitment of CHD1L. Mono-ADP-ribosylated on Glu-3 (H2BE2ADPr) by PARP3 in response to single-strand breaks. Poly ADP-ribosylation on Glu-36 (H2BE35ADPr) by PARP1 regulates adipogenesis: it inhibits phosphorylation at Ser-37 (H2BS36ph), thereby blocking expression of pro-adipogenetic genes. Crotonylation (Kcr) is specifically present in male germ cells and marks testis-specific genes in post-meiotic cells, including X-linked genes that escape sex chromosome inactivation in haploid cells. Crotonylation marks active promoters and enhancers and confers resistance to transcriptional repressors. It is also associated with post-meiotically activated genes on autosomes. Post-translationally, lactylated in macrophages by EP300/P300 by using lactoyl-CoA directly derived from endogenous or exogenous lactate, leading to stimulates gene transcription.

The protein resides in the nucleus. It is found in the chromosome. Core component of nucleosome. Nucleosomes wrap and compact DNA into chromatin, limiting DNA accessibility to the cellular machineries which require DNA as a template. Histones thereby play a central role in transcription regulation, DNA repair, DNA replication and chromosomal stability. DNA accessibility is regulated via a complex set of post-translational modifications of histones, also called histone code, and nucleosome remodeling. Functionally, has broad antibacterial activity. May contribute to the formation of the functional antimicrobial barrier of the colonic epithelium, and to the bactericidal activity of amniotic fluid. This Homo sapiens (Human) protein is Histone H2B type 1-K.